Consider the following 295-residue polypeptide: Diaminopimelate epimerase (295 aa).

Residues asparagine 13, glutamine 46, and asparagine 66 each coordinate substrate. Cysteine 75 functions as the Proton donor in the catalytic mechanism. Substrate is bound by residues 76-77 (GN), asparagine 162, asparagine 195, and 213-214 (ER). The active-site Proton acceptor is cysteine 222. 223-224 (GT) lines the substrate pocket.

Belongs to the diaminopimelate epimerase family. As to quaternary structure, homodimer.

The protein localises to the cytoplasm. The enzyme catalyses (2S,6S)-2,6-diaminopimelate = meso-2,6-diaminopimelate. The protein operates within amino-acid biosynthesis; L-lysine biosynthesis via DAP pathway; DL-2,6-diaminopimelate from LL-2,6-diaminopimelate: step 1/1. In terms of biological role, catalyzes the stereoinversion of LL-2,6-diaminopimelate (L,L-DAP) to meso-diaminopimelate (meso-DAP), a precursor of L-lysine and an essential component of the bacterial peptidoglycan. This is Diaminopimelate epimerase from Psychrobacter arcticus (strain DSM 17307 / VKM B-2377 / 273-4).